Consider the following 64-residue polypeptide: Conotoxin Pu5.2 (64 aa).

An N-terminal signal peptide occupies residues 1 to 22; that stretch reads MRCVPVFVILLLLIASTPSVDA. Positions 23-52 are excised as a propeptide; it reads RPNPKDDVPLASFHGADNANRILRTLWNLR. Ile63 is subject to Isoleucine amide.

It belongs to the conotoxin T superfamily. Contains 2 disulfide bonds that can be either 'C1-C3, C2-C4' or 'C1-C4, C2-C3', since these disulfide connectivities have been observed for conotoxins with cysteine framework V (for examples, see AC P0DQQ7 and AC P81755). As to expression, expressed by the venom duct.

Its subcellular location is the secreted. This is Conotoxin Pu5.2 from Conus pulicarius (Flea-bitten cone).